Reading from the N-terminus, the 301-residue chain is Protein SCO2, mitochondrial (301 aa).

The chain crosses the membrane as a helical span at residues 82-98; it reads ATIALLLLSGGTYAYLS. Residues 101–284 enclose the Thioredoxin domain; sequence RRLLETEKEA…IREQIQAYVP (184 aa). 3 residues coordinate Cu cation: Cys154, Cys158, and His245.

It belongs to the SCO1/2 family.

Its subcellular location is the mitochondrion inner membrane. In terms of biological role, acts as a copper chaperone, transporting copper to the Cu(A) site on the cytochrome c oxidase subunit II (COX2). This chain is Protein SCO2, mitochondrial (SCO2), found in Saccharomyces cerevisiae (strain ATCC 204508 / S288c) (Baker's yeast).